The following is a 772-amino-acid chain: Acetamidase regulatory protein (772 aa).

Residues M1–G16 show a composition bias toward polar residues. A disordered region spans residues M1–G23. The segment at residues A26–I59 is a DNA-binding region (zn(2)-C6 fungal-type). Disordered regions lie at residues R78–E99, A114–H148, and A627–V690. Low complexity predominate over residues A114 to P123. Polar residues-rich tracts occupy residues N124–A144 and P634–S658. The span at L671–P686 shows a compositional bias: low complexity.

It is found in the nucleus. In terms of biological role, positively regulates the expression of genes involved in the catabolism of certain amides, omega amino acids, and lactams. The chain is Acetamidase regulatory protein (amdR) from Aspergillus fumigatus (strain ATCC MYA-4609 / CBS 101355 / FGSC A1100 / Af293) (Neosartorya fumigata).